We begin with the raw amino-acid sequence, 193 residues long: Putative 3-methyladenine DNA glycosylase (193 aa).

The protein belongs to the DNA glycosylase MPG family.

The protein is Putative 3-methyladenine DNA glycosylase of Francisella tularensis subsp. tularensis (strain FSC 198).